A 149-amino-acid polypeptide reads, in one-letter code: SsrA-binding protein (149 aa).

It belongs to the SmpB family.

It localises to the cytoplasm. In terms of biological role, required for rescue of stalled ribosomes mediated by trans-translation. Binds to transfer-messenger RNA (tmRNA), required for stable association of tmRNA with ribosomes. tmRNA and SmpB together mimic tRNA shape, replacing the anticodon stem-loop with SmpB. tmRNA is encoded by the ssrA gene; the 2 termini fold to resemble tRNA(Ala) and it encodes a 'tag peptide', a short internal open reading frame. During trans-translation Ala-aminoacylated tmRNA acts like a tRNA, entering the A-site of stalled ribosomes, displacing the stalled mRNA. The ribosome then switches to translate the ORF on the tmRNA; the nascent peptide is terminated with the 'tag peptide' encoded by the tmRNA and targeted for degradation. The ribosome is freed to recommence translation, which seems to be the essential function of trans-translation. The protein is SsrA-binding protein of Fervidobacterium nodosum (strain ATCC 35602 / DSM 5306 / Rt17-B1).